A 353-amino-acid chain; its full sequence is MALSPEKEKALAAAMSQIDRKYGKGSIMRMGEVSSKLAIEVIPTGSIALDIALGVGGVPRGRVVEIYGPESSGKTTLAQHIIAEAQKMGGIAAFIDAEHAFDPVYAARCGVDVNNLLVSQPDYGEQALEICEALVRSNAVDVVVVDSVAALVPRAEIEGDMGDSLPGLQARLMSQALRKLSGAISKSRAVVIFLNQLRLKIGVMFGSPETTTGGQALKFYASVRMDIRRIETLKNGQETIGSRTRVKVVKNKVAPPFRQAEFDIMHNEGISRAGNILDVGVELDIIRKSGAWFYLGDDRLGQGRENAKQFLNENPALADEIERLIRAHAMAAPISIVSPKEDDAVEDAGLFEE.

An ATP-binding site is contributed by 68–75 (GPESSGKT).

This sequence belongs to the RecA family.

It localises to the cytoplasm. Can catalyze the hydrolysis of ATP in the presence of single-stranded DNA, the ATP-dependent uptake of single-stranded DNA by duplex DNA, and the ATP-dependent hybridization of homologous single-stranded DNAs. It interacts with LexA causing its activation and leading to its autocatalytic cleavage. This chain is Protein RecA, found in Roseiflexus sp. (strain RS-1).